The following is a 274-amino-acid chain: THAP domain-containing protein 8 (274 aa).

The THAP-type zinc finger occupies 1 to 85; the sequence is MPKYCRAPNC…LRPDAVPSIF (85 aa). A disordered region spans residues 83 to 121; sequence SIFSRGPPAKSQRRTRSTQKPVSPPPPLQKNTPLPQSPA.

This chain is THAP domain-containing protein 8 (THAP8), found in Homo sapiens (Human).